The following is a 483-amino-acid chain: GTPase Der (483 aa).

EngA-type G domains lie at 3-167 (FTLA…GEER) and 212-387 (LRIA…EIWN). GTP contacts are provided by residues 9-16 (GRPNVGKS), 56-60 (DTAGL), 119-122 (NKAE), 218-225 (GRPNAGKS), 265-269 (DTAGM), and 330-333 (NKWD). A KH-like domain is found at 388-472 (RRISTGRLNR…PIRLSLRTSD (85 aa)).

The protein belongs to the TRAFAC class TrmE-Era-EngA-EngB-Septin-like GTPase superfamily. EngA (Der) GTPase family. As to quaternary structure, associates with the 50S ribosomal subunit.

GTPase that plays an essential role in the late steps of ribosome biogenesis. The protein is GTPase Der of Brucella abortus (strain 2308).